Consider the following 89-residue polypeptide: Arminin 375 (89 aa).

The N-terminal stretch at 1–18 (MKAVFAILFLAFIALTYA) is a signal peptide. The propeptide occupies 19-57 (KSYDEVKEEIKNEVEREIFEDLEEESDELDNYVEESNDA). An Alanine amide modification is found at A86.

This sequence belongs to the arminin family. Expressed in entodermal epithelium along the body column.

It localises to the secreted. Its subcellular location is the target cell membrane. Antimicrobial peptide with a broad-spectrum antimicrobial activity. Keeps its antibacterial activity under a wide range of salt concentrations that mimic physiological conditions of human blood, which is surprising, since Hydra is an obligate freshwater animal with nearly no salt tolerance. Does not affect red blood cells. This chain is Arminin 375, found in Hydra oligactis (Brown hydra).